Reading from the N-terminus, the 562-residue chain is Aureusidin synthase (562 aa).

2 disulfides stabilise this stretch: C71/C86 and C85/C148. Positions 147, 168, 177, 301, 305, and 335 each coordinate Cu cation. A cross-link (2'-(S-cysteinyl)-histidine (Cys-His)) is located at residues 151–168 (CAGAYNQAGFTNLKLQIH).

It belongs to the tyrosinase family. As to quaternary structure, monomer. It depends on Cu(2+) as a cofactor. Glycosylated. Post-translationally, contains probably N- and C-terminal propeptides. Expressed in petals. Not detected in stems and leaves.

Its subcellular location is the vacuole lumen. The catalysed reaction is 2',4,4',6'-tetrahydroxychalcone 4'-O-beta-D-glucoside + O2 = aureusidin 6-O-beta-glucoside + H2O. The enzyme catalyses 2 2',3,4,4',6'-pentahydroxychalcone 4'-O-beta-D-glucoside + O2 + 2 H(+) = 2 aureusidin 6-O-beta-glucoside + 2 H2O. It catalyses the reaction 2',3,4,4',6'-pentahydroxychalcone 4'-O-beta-D-glucoside + O2 + H(+) = bracteatin 6-O-beta-glucoside + H2O. H(2)O(2) activates the 3-hydroxylation and oxidative cyclization of tetrahydroxychalcone but inhibits reaction with pentahydroxychalcone. Inhibited by phenylthiourea. Involved in the biosynthesis of aurones, plant flavonoids that provide yellow coloration to flowers. Can use tetrahydroxychalcone (THC), pentahydroxychalcone (PHC), THC 4'-glucoside and PHC 4'-glucoside as substrates, but not 2'-hydroxychalcone, 4-hydroxychalcone, PHC 3-glucoside, 2',6'-dihydroxy-4,4'-dimethoxychalcone, naringenin, eriodictyol and 4,4',6-trihydroxyaurone. Can also produce bracteatin from PHC. This Antirrhinum majus (Garden snapdragon) protein is Aureusidin synthase (AS1).